Reading from the N-terminus, the 434-residue chain is Serine--tRNA ligase (434 aa).

239-241 (TAE) provides a ligand contact to L-serine. 270 to 272 (RSE) is an ATP binding site. Glutamate 293 lines the L-serine pocket. 357-360 (EISS) is a binding site for ATP. L-serine is bound at residue serine 393.

This sequence belongs to the class-II aminoacyl-tRNA synthetase family. Type-1 seryl-tRNA synthetase subfamily. As to quaternary structure, homodimer. The tRNA molecule binds across the dimer.

It localises to the cytoplasm. The enzyme catalyses tRNA(Ser) + L-serine + ATP = L-seryl-tRNA(Ser) + AMP + diphosphate + H(+). It carries out the reaction tRNA(Sec) + L-serine + ATP = L-seryl-tRNA(Sec) + AMP + diphosphate + H(+). It participates in aminoacyl-tRNA biosynthesis; selenocysteinyl-tRNA(Sec) biosynthesis; L-seryl-tRNA(Sec) from L-serine and tRNA(Sec): step 1/1. Catalyzes the attachment of serine to tRNA(Ser). Is also able to aminoacylate tRNA(Sec) with serine, to form the misacylated tRNA L-seryl-tRNA(Sec), which will be further converted into selenocysteinyl-tRNA(Sec). This chain is Serine--tRNA ligase, found in Pseudoalteromonas translucida (strain TAC 125).